The chain runs to 358 residues: Zinc-type alcohol dehydrogenase-like protein YogA (358 aa).

The protein belongs to the zinc-containing alcohol dehydrogenase family. Quinone oxidoreductase subfamily.

It functions in the pathway secondary metabolite biosynthesis. Functionally, zinc-type alcohol dehydrogenase-like protein; part of the gene cluster that mediates the biosynthesis of phomenoic acid, a long chain aliphatic carboxylic acid that does not appear to be essential for pathogenicity but may play a role in allowing to outcompete other fungi in the environmental niche via its antifungal properties. The polyketide synthase produces the long methylated aliphatic carboxylic acid chain of phomenoic acid. The cluster-specific cytochrome P450 monooxygenase may then hydroxylate the methyl group of carbon 31. The putative dehydrogenase YogA, which has no obvious role in phomenoic acid biosynthesis, may further modify phomenoic acid to produce a compound not identified yet. The polypeptide is Zinc-type alcohol dehydrogenase-like protein YogA (Leptosphaeria maculans (strain JN3 / isolate v23.1.3 / race Av1-4-5-6-7-8) (Blackleg fungus)).